The chain runs to 299 residues: uncharacterized protein (299 aa).

This is an uncharacterized protein from Archaeoglobus fulgidus (strain ATCC 49558 / DSM 4304 / JCM 9628 / NBRC 100126 / VC-16).